Consider the following 121-residue polypeptide: Large ribosomal subunit protein uL18 (121 aa).

It belongs to the universal ribosomal protein uL18 family. Part of the 50S ribosomal subunit; part of the 5S rRNA/L5/L18/L25 subcomplex. Contacts the 5S and 23S rRNAs.

Its function is as follows. This is one of the proteins that bind and probably mediate the attachment of the 5S RNA into the large ribosomal subunit, where it forms part of the central protuberance. In Paracidovorax citrulli (strain AAC00-1) (Acidovorax citrulli), this protein is Large ribosomal subunit protein uL18.